The chain runs to 274 residues: Acetylaranotin bis-thiomethyltransferase (274 aa).

This sequence belongs to the class I-like SAM-binding methyltransferase superfamily.

It functions in the pathway mycotoxin biosynthesis. Acetylaranotin bis-thiomethyltransferase involved in the biosynthesis of acetylaranotin derivatives, members of the epipolythiodioxopiperazine (ETP) class of toxins characterized by a disulfide-bridged cyclic dipeptide. The first step of acetylaranotin biosynthesis is performed by the NRPS ataP which produces diketopiperazine cyclo-L-Phe-L-Phe via the condensation of 2 phenylalanines (L-Phe). The ataC domain of ataTC then catalyzes the formation of bishydroxylation of cyclo-L-Phe-L-Phe. The glutathione S-transferase domain ataG in ataIMG further catalyzes the conjugation of two glutathiones to the bishydroxylated intermediate. Next, the dipeptidase ataJ removes the Glu residues. The following step is performed by the carbon sulfur lyase domain ataI of ataIMG which may convert the bis-cysteinyl adduct to yield an epidithiol intermediate. The ataT domain from ataTC then catalyzes the oxidation of the free dithiols, followed by a cyclization step catalyzed by the cytochrome P450 ataF. AtaF probably acts as an epoxidase to promote a dual epoxidation formation at C8 and C9 along with C8' and C9', followed by the spontaneous nucleophilic attack of the amide nitrogens N10 and N10' to yield an intermediate with the pyrrolidine partial structure. The final steps of acetylaranotin biosynthesis involve the acetylation and ring rearrangement of an epitetrathiodiketopiperazine intermediate to produce acetylaranotin. AtaH probably catalyzes the acetylation of epitetrathiodiketopiperazine to produce a diacetate and ataY is responsible for the formation of the dihydrooxepin moiety that converts the diacetate intermediate to acetylaranotin via acetylapoaranotin. Both enzymes could function independently in the absence of the other. The acetylaranotin bis-thiomethyltransferase ataS located outside of acetylaranotin gene cluster is the main thiomethyltransferase responsible for converting acetylaranotin and its related intermediates to their methylated forms. The sequence is that of Acetylaranotin bis-thiomethyltransferase from Aspergillus terreus (strain NIH 2624 / FGSC A1156).